Reading from the N-terminus, the 2122-residue chain is Pecanex-like protein 2 (2122 aa).

Helical transmembrane passes span 36-53 (LYLWLFLLLLPLALHLAF) and 60-82 (ALFYCGSVTIFFAVIKLISYRLH). Disordered regions lie at residues 92–164 (QHRS…ELPA) and 180–250 (QPEA…LVNP). Polar residues-rich tracts occupy residues 146 to 157 (SRGQSVHSQHSS) and 185 to 203 (ASSTSPGMKSESLPASQGR). The N-linked (GlcNAc...) asparagine glycan is linked to asparagine 288. 2 stretches are compositionally biased toward low complexity: residues 392–407 (VTSSDRTSVRSSAESA) and 458–476 (PDRCSGSGPGDGSPTPGST). 2 disordered regions span residues 392-556 (VTSS…QIPN) and 575-634 (VVAP…PVFT). Residues 528-538 (STKEVVSDGEK) show a composition bias toward basic and acidic residues. Asparagine 556 carries N-linked (GlcNAc...) asparagine glycosylation. Over residues 599–618 (TKEEAVENEKPNGRDPKPGK) the composition is skewed to basic and acidic residues. Residues 625 to 634 (DPANGSPVFT) show a composition bias toward polar residues. The next 13 helical transmembrane spans lie at 825–845 (VAVLLSVLVSLLGFLTLNRGF), 849–869 (LWVLLFCLVMASCQYSLLKSV), 882–902 (QIIAYSRPIYFCMLCSLILLL), 933–953 (HLIVFLCCFPAISLLGLFPQI), 976–998 (GITSAVYSVGRSVLAAALLHAFC), 1010–1030 (HIPALFSAFCGLLVALSYHLS), 1080–1100 (LVICSAAAVLSFAVSASTVFL), 1105–1125 (FLSIVLFALAGTVGLITHHLL), 1174–1194 (YLLYPAIVLNALTLDAFSISN), 1218–1238 (SFCNPVHQFANLGFTVIFFHF), 1245–1265 (ESFLLDFFMVSIVFTKLGDLL), 1270–1290 (FVLAYVAPWQMAWGSSFHVFA), and 1305–1325 (TFATSIFSTPLSPFLGSVIFI). N-linked (GlcNAc...) asparagine glycans are attached at residues asparagine 1393, asparagine 1534, and asparagine 1802. Disordered regions lie at residues 1858–1943 (SVGQ…SSGP) and 1955–1991 (STSVHELAQRPSGSRLSLHTSAASLHSQPPPVTTTGH). The segment covering 1888-1898 (ESRDGSTEQPR) has biased composition (basic and acidic residues). A compositionally biased stretch (polar residues) spans 1922–1942 (SQSVQAHSAISQRPPTLSSSG). A compositionally biased stretch (low complexity) spans 1968–1981 (SRLSLHTSAASLHS). N-linked (GlcNAc...) asparagine glycosylation is present at asparagine 2039. A disordered region spans residues 2097-2122 (VLCRRASQEDMGLDDTASQQSTSDEQ). A compositionally biased stretch (polar residues) spans 2112 to 2122 (TASQQSTSDEQ).

Belongs to the pecanex family.

Its subcellular location is the membrane. May play a role in tumorigenesis. In Mus musculus (Mouse), this protein is Pecanex-like protein 2.